A 392-amino-acid polypeptide reads, in one-letter code: MRPTPLFFALLQIALAAKRADQICNDHCSNAYQKQQSCGGTDDVSSQSATLKCLCADESYWSELASCDCSSYDSNVSAQDLRAYYCNVGVTGGSQGQSTSGDANAATNSNDATGTATDAAAATNGNDGASGTADANNANNTDGSGATDASNTNNNGSTDTVNTNTAGSGSSETTAAAGAAAGTAAGTNSASDQANETGSDATNAATGSDASGTAATNTASTASGATSGSGSDAAKKTGTNTDSDSDTATKGSDATAGSMTTAASGLGATNGTSNSTGSHSGSMTSITTGSGFTNGTSSRSGSGSGSSTRSGSNSDSSSSGSGSRSSSSADSSDSDSGSGSSSTESGSGSGSGSSTSSGSGSGSGSSTRSGGFAATIPTVTFGSLVALALNLL.

The signal sequence occupies residues 1–16 (MRPTPLFFALLQIALA). N-linked (GlcNAc...) asparagine glycans are attached at residues Asn75, Asn139, and Asn155. The segment at 95–375 (QGQSTSGDAN…STRSGGFAAT (281 aa)) is disordered. Over residues 96–147 (GQSTSGDANAATNSNDATGTATDAAAATNGNDGASGTADANNANNTDGSGAT) the composition is skewed to low complexity. Residues 148–161 (DASNTNNNGSTDTV) are compositionally biased toward polar residues. Residues 162–191 (NTNTAGSGSSETTAAAGAAAGTAAGTNSAS) show a composition bias toward low complexity. N-linked (GlcNAc...) asparagine glycosylation occurs at Asn195. The segment covering 199 to 232 (SDATNAATGSDASGTAATNTASTASGATSGSGSD) has biased composition (low complexity). Residues 237–250 (TGTNTDSDSDTATK) show a composition bias toward polar residues. A compositionally biased stretch (low complexity) spans 251–371 (GSDATAGSMT…GSGSSTRSGG (121 aa)). N-linked (GlcNAc...) asparagine glycans are attached at residues Asn270, Asn274, and Asn294. Ser363 carries the GPI-anchor amidated serine lipid modification. The propeptide at 364–392 (GSSTRSGGFAATIPTVTFGSLVALALNLL) is removed in mature form.

This sequence belongs to the IHD1 family. The GPI-anchor is attached to the protein in the endoplasmic reticulum and serves to target the protein to the cell surface. There, the glucosamine-inositol phospholipid moiety is cleaved off and the GPI-modified mannoprotein is covalently attached via its lipidless GPI glycan remnant to the 1,6-beta-glucan of the outer cell wall layer.

The protein localises to the secreted. Its subcellular location is the cell wall. The protein resides in the membrane. Its function is as follows. GPI-anchored cell wall protein that may be involved in cell wall organization, hyphal growth, as well as in virulence. The chain is Induced during hyphae development protein 1 (IHD1) from Candida albicans (strain SC5314 / ATCC MYA-2876) (Yeast).